A 714-amino-acid chain; its full sequence is NCK-interacting protein with SH3 domain (714 aa).

The SH3 domain maps to 1-58; that stretch reads MYRALYAFRSAEPNAMAFAAGETFLVLERSSTHWWLAARARSGETGYVPPAYLHRLQG. Disordered stretches follow at residues 103 to 126 and 139 to 298; these read TLSRRGTSASSATVMTPSTSDHHL and RTGF…AAET. Residues 106 to 121 show a composition bias toward polar residues; that stretch reads RRGTSASSATVMTPST. S120 carries the post-translational modification Phosphoserine. The Nuclear localization signal motif lies at 168–185; it reads RRAAPTTPPPPVKRRDRE. At T174 the chain carries Phosphothreonine. The segment covering 200 to 215 has biased composition (low complexity); the sequence is SGGSSVSSGSSASSTS. Over residues 216 to 226 the composition is skewed to polar residues; sequence MDTLYTGSSPS. Over residues 252-263 the composition is skewed to pro residues; the sequence is QPSPSKAPSPEP. Phosphoserine occurs at positions 260, 286, and 673.

In terms of assembly, associates with the intermediate filaments, vimentin and desmin. Binds the first and third SH3 domains of NCK. Binds the proline-rich domains of N-WASP through its SH3 domain. Similarly, binds diaphanous protein homolog 1 (DRF1). Binds the SH3 domains of GRB2 through its proline-rich domains. Interacts with FASLG.

It localises to the nucleus. Its function is as follows. Has an important role in stress fiber formation induced by active diaphanous protein homolog 1 (DRF1). Induces microspike formation, in vivo. In vitro, stimulates N-WASP-induced ARP2/3 complex activation in the absence of CDC42. May play an important role in the maintenance of sarcomere and/or in the assembly of myofibrils into sarcomeres. Implicated in regulation of actin polymerization and cell adhesion. This Mus musculus (Mouse) protein is NCK-interacting protein with SH3 domain (Nckipsd).